A 363-amino-acid polypeptide reads, in one-letter code: UDP-N-acetylglucosamine--N-acetylmuramyl-(pentapeptide) pyrophosphoryl-undecaprenol N-acetylglucosamine transferase (363 aa).

UDP-N-acetyl-alpha-D-glucosamine contacts are provided by residues 12-14 (TAG), Arg166, Ser196, and Gln291.

Belongs to the glycosyltransferase 28 family. MurG subfamily.

The protein resides in the cell inner membrane. The catalysed reaction is di-trans,octa-cis-undecaprenyl diphospho-N-acetyl-alpha-D-muramoyl-L-alanyl-D-glutamyl-meso-2,6-diaminopimeloyl-D-alanyl-D-alanine + UDP-N-acetyl-alpha-D-glucosamine = di-trans,octa-cis-undecaprenyl diphospho-[N-acetyl-alpha-D-glucosaminyl-(1-&gt;4)]-N-acetyl-alpha-D-muramoyl-L-alanyl-D-glutamyl-meso-2,6-diaminopimeloyl-D-alanyl-D-alanine + UDP + H(+). It functions in the pathway cell wall biogenesis; peptidoglycan biosynthesis. In terms of biological role, cell wall formation. Catalyzes the transfer of a GlcNAc subunit on undecaprenyl-pyrophosphoryl-MurNAc-pentapeptide (lipid intermediate I) to form undecaprenyl-pyrophosphoryl-MurNAc-(pentapeptide)GlcNAc (lipid intermediate II). The polypeptide is UDP-N-acetylglucosamine--N-acetylmuramyl-(pentapeptide) pyrophosphoryl-undecaprenol N-acetylglucosamine transferase (Legionella pneumophila (strain Paris)).